The following is a 470-amino-acid chain: MTTFMTKDFLLKNDIARTLYHKYAAPMPIYDFHCHLSPQEIADDRRFDNLGQIWLEGDHYKWRALRSAGVDESLITGKETSDYEKYMAWANTVPKTLGNPLYHWTHLELRRPFGITDTLFGPDTAESIWTQCNEKLATPAFSARGIMQQMNVRMVGTTDDPIDSLAYHRQIAADDSFGIEVAPSWRPDKAFKIELDGFVDYLGKLEAAADVNITRFDDLRRALTRRLDHFAACGCRAADHGIETLRFAPVPDDAQLDAILGKRLAGETLSELEIAQFTTAVLVWLGRQYAARGWVMQLHIGAIRNNNTRMFRLLGPDTGFDSIGDNNISWALSRLLDSMDVTNELPKTILYCLNPRDNEVLATMTGNFQGPGIAGKVQFGSGWWFNDQKDGMLRQLEQLSQMGLLSQFVGMLTDSRSFLSYTRHEYFRRILCNLLGQWAQDGEIPDDEAMLSRMVQDICFNNAQHYFAIK.

It belongs to the metallo-dependent hydrolases superfamily. Uronate isomerase family.

It carries out the reaction D-glucuronate = D-fructuronate. The catalysed reaction is aldehydo-D-galacturonate = keto-D-tagaturonate. It participates in carbohydrate metabolism; pentose and glucuronate interconversion. This chain is Uronate isomerase, found in Salmonella arizonae (strain ATCC BAA-731 / CDC346-86 / RSK2980).